Consider the following 164-residue polypeptide: MHGNSLQYVKLSEHASGLIRGSAGAAGYDLAAAHPVVVPSFGRALVKTDLAVKMPPGLYGRVAPRSGLALKKFIDVGAGVVDPDYRGNLGVILFNFGCDPFRVKRGDRIAQLVLERYESPPILEVDSLDSTDRGDAGYGSTGVGNWHSALWEGFSSGDLKESFV.

65-67 lines the substrate pocket; sequence RSG. At lysine 71 the chain carries N6-acetyllysine; by host. Residues 79-82, glycine 90, and 138-139 each bind substrate; these read GVVD and YG.

This sequence belongs to the dUTPase family. Mg(2+) is required as a cofactor.

The enzyme catalyses dUTP + H2O = dUMP + diphosphate + H(+). This enzyme is involved in nucleotide metabolism: it produces dUMP, the immediate precursor of thymidine nucleotides and it decreases the intracellular concentration of dUTP so that uracil cannot be incorporated into DNA. This is Putative deoxyuridine 5'-triphosphate nucleotidohydrolase from Dryophytes versicolor (chameleon treefrog).